Here is a 75-residue protein sequence, read N- to C-terminus: Acyl carrier protein (75 aa).

Residues 1-74 (MLDKVKEIIV…DVINYIEANK (74 aa)) enclose the Carrier domain. At Ser34 the chain carries O-(pantetheine 4'-phosphoryl)serine.

This sequence belongs to the acyl carrier protein (ACP) family. Post-translationally, 4'-phosphopantetheine is transferred from CoA to a specific serine of apo-ACP by AcpS. This modification is essential for activity because fatty acids are bound in thioester linkage to the sulfhydryl of the prosthetic group.

Its subcellular location is the cytoplasm. The protein operates within lipid metabolism; fatty acid biosynthesis. Carrier of the growing fatty acid chain in fatty acid biosynthesis. The chain is Acyl carrier protein from Fusobacterium nucleatum subsp. nucleatum (strain ATCC 25586 / DSM 15643 / BCRC 10681 / CIP 101130 / JCM 8532 / KCTC 2640 / LMG 13131 / VPI 4355).